The primary structure comprises 65 residues: Large ribosomal subunit protein bL35 (65 aa).

This sequence belongs to the bacterial ribosomal protein bL35 family.

This Nitrosomonas europaea (strain ATCC 19718 / CIP 103999 / KCTC 2705 / NBRC 14298) protein is Large ribosomal subunit protein bL35.